The chain runs to 452 residues: tRNA modification GTPase MnmE (452 aa).

(6S)-5-formyl-5,6,7,8-tetrahydrofolate is bound by residues arginine 21, glutamate 78, and lysine 118. Positions 214-375 (GMKAVIAGRP…LREHLKTSMG (162 aa)) constitute a TrmE-type G domain. Asparagine 224 is a binding site for K(+). Residues 224 to 229 (NAGKSS), 243 to 249 (TNIAGTT), and 268 to 271 (DTAG) each bind GTP. Serine 228 contacts Mg(2+). Residues threonine 243, isoleucine 245, and threonine 248 each coordinate K(+). Residue threonine 249 coordinates Mg(2+). Lysine 452 is a binding site for (6S)-5-formyl-5,6,7,8-tetrahydrofolate.

The protein belongs to the TRAFAC class TrmE-Era-EngA-EngB-Septin-like GTPase superfamily. TrmE GTPase family. In terms of assembly, homodimer. Heterotetramer of two MnmE and two MnmG subunits. Requires K(+) as cofactor.

It localises to the cytoplasm. In terms of biological role, exhibits a very high intrinsic GTPase hydrolysis rate. Involved in the addition of a carboxymethylaminomethyl (cmnm) group at the wobble position (U34) of certain tRNAs, forming tRNA-cmnm(5)s(2)U34. The chain is tRNA modification GTPase MnmE from Haemophilus ducreyi (strain 35000HP / ATCC 700724).